A 230-amino-acid polypeptide reads, in one-letter code: Acyl-protein thioesterase 1 (230 aa).

Residues S119, D174, and H208 each act as charge relay system in the active site. K224 carries the N6-acetyllysine modification.

It belongs to the AB hydrolase superfamily. AB hydrolase 2 family. In terms of assembly, homodimer.

The protein resides in the cytoplasm. The protein localises to the cell membrane. It is found in the nucleus membrane. It localises to the endoplasmic reticulum. It carries out the reaction S-hexadecanoyl-L-cysteinyl-[protein] + H2O = L-cysteinyl-[protein] + hexadecanoate + H(+). The catalysed reaction is 1-hexadecanoyl-sn-glycero-3-phosphocholine + H2O = sn-glycerol 3-phosphocholine + hexadecanoate + H(+). It catalyses the reaction a 1-(9Z-octadecenoyl)-2-acyl-sn-glycero-3-phosphocholine + H2O = a 2-acyl-sn-glycero-3-phosphocholine + (9Z)-octadecenoate + H(+). Acts as an acyl-protein thioesterase. Hydrolyzes fatty acids from S-acylated cysteine residues in proteins such as trimeric G alpha proteins or HRAS. Acts as a palmitoyl thioesterase that catalyzes depalmitoylation of proteins, such as ADRB2, KCNMA1 and SQSTM1. Acts as a negative regulator of autophagy by mediating palmitoylation of SQSTM1, decreasing affinity between SQSTM1 and ATG8 proteins and recruitment of ubiquitinated cargo proteins to autophagosomes. Acts as a lysophospholipase and hydrolyzes lysophosphatidylcholine (lyso-PC). Also hydrolyzes lysophosphatidylethanolamine (lyso-PE), lysophosphatidylinositol (lyso-PI) and lysophosphatidylserine (lyso-PS). Has much higher thioesterase activity than lysophospholipase activity. Contributes to the production of lysophosphatidic acid (LPA) during blood coagulation by recognizing and cleaving plasma phospholipids to generate lysophospholipids which in turn act as substrates for ENPP2 to produce LPA. The polypeptide is Acyl-protein thioesterase 1 (LYPLA1) (Pongo abelii (Sumatran orangutan)).